The sequence spans 425 residues: UDP-N-acetylglucosamine 1-carboxyvinyltransferase (425 aa).

25-26 (KN) provides a ligand contact to phosphoenolpyruvate. UDP-N-acetyl-alpha-D-glucosamine is bound at residue Arg-95. The Proton donor role is filled by Cys-119. Cys-119 carries the 2-(S-cysteinyl)pyruvic acid O-phosphothioketal modification. UDP-N-acetyl-alpha-D-glucosamine contacts are provided by residues 124 to 128 (RPVDQ), Asp-306, and Ile-328.

The protein belongs to the EPSP synthase family. MurA subfamily.

The protein localises to the cytoplasm. The enzyme catalyses phosphoenolpyruvate + UDP-N-acetyl-alpha-D-glucosamine = UDP-N-acetyl-3-O-(1-carboxyvinyl)-alpha-D-glucosamine + phosphate. The protein operates within cell wall biogenesis; peptidoglycan biosynthesis. Cell wall formation. Adds enolpyruvyl to UDP-N-acetylglucosamine. The polypeptide is UDP-N-acetylglucosamine 1-carboxyvinyltransferase (Thermus thermophilus (strain ATCC 27634 / DSM 579 / HB8)).